We begin with the raw amino-acid sequence, 572 residues long: NADP-dependent malic enzyme (572 aa).

M1 carries the N-acetylmethionine modification. The active-site Proton donor is the Y102. R155 is a binding site for NADP(+). Residue K173 is the Proton acceptor of the active site. Positions 245, 246, and 269 each coordinate a divalent metal cation. Residues D269 and 301 to 318 (GAGEAALGIAHLIVMAME) contribute to the NADP(+) site. A Phosphoserine modification is found at S336. N408 is an NADP(+) binding site.

This sequence belongs to the malic enzymes family. Homotetramer. The cofactor is Mg(2+). It depends on Mn(2+) as a cofactor. As to expression, ubiquitous. Up-regulated by 3,5,3'-triiodo-L-thyronine in the liver, kidney and heart.

It localises to the cytoplasm. The enzyme catalyses (S)-malate + NADP(+) = pyruvate + CO2 + NADPH. It carries out the reaction oxaloacetate + H(+) = pyruvate + CO2. Its function is as follows. Catalyzes the oxidative decarboxylation of (S)-malate in the presence of NADP(+) and divalent metal ions, and decarboxylation of oxaloacetate. In Rattus norvegicus (Rat), this protein is NADP-dependent malic enzyme (Me1).